Consider the following 339-residue polypeptide: 3-isopropylmalate dehydrogenase (339 aa).

4 residues coordinate substrate: Arg87, Arg97, Arg124, and Asp214. 3 residues coordinate Mg(2+): Asp214, Asp238, and Asp242. 274–286 (GSAPDIAGQGIAD) contacts NAD(+).

This sequence belongs to the isocitrate and isopropylmalate dehydrogenases family. LeuB type 2 subfamily. Homodimer. Requires Mg(2+) as cofactor. It depends on Mn(2+) as a cofactor.

It localises to the cytoplasm. The catalysed reaction is (2R,3S)-3-isopropylmalate + NAD(+) = 4-methyl-2-oxopentanoate + CO2 + NADH. Its pathway is amino-acid biosynthesis; L-leucine biosynthesis; L-leucine from 3-methyl-2-oxobutanoate: step 3/4. Functionally, catalyzes the oxidation of 3-carboxy-2-hydroxy-4-methylpentanoate (3-isopropylmalate) to 3-carboxy-4-methyl-2-oxopentanoate. The product decarboxylates to 4-methyl-2 oxopentanoate. The sequence is that of 3-isopropylmalate dehydrogenase from Mycobacterium ulcerans (strain Agy99).